A 520-amino-acid chain; its full sequence is UvrABC system protein C (520 aa).

Residues 11 to 89 (EEPGCYQFKD…IKKYQPKYNI (79 aa)) enclose the GIY-YIG domain. In terms of domain architecture, UVR spans 195 to 230 (QDLIYDLRKEMETFAAAEEYEKALVIRDRIAAIENL).

The protein belongs to the UvrC family. Interacts with UvrB in an incision complex.

The protein localises to the cytoplasm. Functionally, the UvrABC repair system catalyzes the recognition and processing of DNA lesions. UvrC both incises the 5' and 3' sides of the lesion. The N-terminal half is responsible for the 3' incision and the C-terminal half is responsible for the 5' incision. The protein is UvrABC system protein C of Methanospirillum hungatei JF-1 (strain ATCC 27890 / DSM 864 / NBRC 100397 / JF-1).